A 217-amino-acid polypeptide reads, in one-letter code: Aprataxin-like protein (217 aa).

The region spanning 6–139 is the HIT domain; sequence ALKNYVTSPE…HIHVISKDFH (134 aa). Interaction with DNA regions lie at residues 34–38, 121–132, and 144–148; these read DSFPK, HSVPSMANLHIH, and KNKKH. Residue H130 is the Nucleophile of the active site. Residues C188, C191, H205, and E209 each contribute to the Zn(2+) site.

The protein localises to the nucleus. The protein resides in the cytoplasm. It carries out the reaction a 5'-end adenosine-5'-diphospho-5'-2'-deoxyribonucleoside-DNA + H2O = a 5'-end 5'-phospho-2'-deoxyribonucleoside-DNA + AMP + 2 H(+). The catalysed reaction is a 5'-end adenosine-5'-diphospho-5'-ribonucleoside-2'-deoxyribonucleotide-DNA + H2O = a 5'-end 5'-phospho-ribonucleoside-2'-deoxyribonucleotide-DNA + AMP + 2 H(+). The enzyme catalyses a 3'-end 2'-deoxyribonucleotide-3'-diphospho-5'-guanosine-DNA + H2O = a 3'-end 2'-deoxyribonucleotide 3'-phosphate-DNA + GMP + 2 H(+). DNA-binding protein involved in single-strand DNA break repair, double-strand DNA break repair and base excision repair. Resolves abortive DNA ligation intermediates formed either at base excision sites, or when DNA ligases attempt to repair non-ligatable breaks induced by reactive oxygen species. Catalyzes the release of adenylate groups covalently linked to 5'-phosphate termini, resulting in the production of 5'-phosphate termini that can be efficiently rejoined. Likewise, catalyzes the release of 3'-linked guanosine (DNAppG) and inosine (DNAppI) from DNA, but has higher specific activity with 5'-linked adenosine (AppDNA). The chain is Aprataxin-like protein (HNT3) from Saccharomyces cerevisiae (strain ATCC 204508 / S288c) (Baker's yeast).